Reading from the N-terminus, the 1117-residue chain is ATP-dependent RNA helicase mtr4 (1117 aa).

Residues 19 to 86 (KSLKEESKNS…DNQDLIPNND (68 aa)) form a disordered region. The span at 65 to 79 (SATKRAKIENLKDNQ) shows a compositional bias: basic and acidic residues. Residues 207-363 (IACIERQESV…WITKIHRQPC (157 aa)) form the Helicase ATP-binding domain. Residue 220-227 (AHTSAGKT) coordinates ATP. The DEIH box signature appears at 311 to 314 (DEIH). The disordered stretch occupies residues 414–433 (GDDPAAMATKGNAKKGKTGK). Positions 441 to 642 (DIYKIVKMIM…LSYNMILNLL (202 aa)) constitute a Helicase C-terminal domain.

The protein belongs to the helicase family. SKI2 subfamily. Component of the TRAMP complex composed of at least cid14, mtr4, and air1.

It is found in the nucleus. In terms of biological role, component of the TRAMP complex which has a poly(A) RNA polymerase activity and is involved in a post-transcriptional quality control mechanism limiting inappropriate expression of genetic information. Polyadenylation is required for the degradative activity of the exosome on several of its nuclear RNA substrates. Required for heterochromatic gene silencing at centromeric repeats by either exosome- or RNAi-mediated degradation of heterochromatic transcripts. This chain is ATP-dependent RNA helicase mtr4 (mtr4), found in Schizosaccharomyces pombe (strain 972 / ATCC 24843) (Fission yeast).